The primary structure comprises 446 residues: Oxysterols receptor LXR-beta (446 aa).

Over residues 1–28 (MSSPTSSLDTPLPGNGSPQPSTSSTSPT) the composition is skewed to low complexity. The disordered stretch occupies residues 1 to 69 (MSSPTSSLDT…PERKRKKGPA (69 aa)). The tract at residues 1 to 76 (MSSPTSSLDT…GPAPKMLGHE (76 aa)) is transactivation AF-1; required for ligand-independent transactivation function. A DNA-binding region (nuclear receptor) is located at residues 75-152 (HELCRVCGDK…AGMREQCVLS (78 aa)). 2 consecutive NR C4-type zinc fingers follow at residues 78–98 (CRVCGDKASGFHYNVLSCEGC) and 116–140 (CRGSGTCQMDAFMRRKCQLCRLRKC). A disordered region spans residues 160–201 (KIQKQQQQQPPPPTEPASGSSARPAASPGTSEASSQGSGEGE). Residues 175-196 (PASGSSARPAASPGTSEASSQG) show a composition bias toward low complexity. The interval 205 to 446 (LTAAQELMIQ…LLSEIWDVHE (242 aa)) is transactivation AF-2; required for ligand-dependent transactivation function; mediates interaction with CCAR2. One can recognise an NR LBD domain in the interval 208–446 (AQELMIQQLV…LLSEIWDVHE (239 aa)). Residues lysine 395 and lysine 433 each participate in a glycyl lysine isopeptide (Lys-Gly) (interchain with G-Cter in SUMO2) cross-link.

The protein belongs to the nuclear hormone receptor family. NR1 subfamily. Forms a heterodimer with RXR. Interacts with CCAR2 (via N-terminus) in a ligand-independent manner. Interacts (when sumoylated) with GPS2; interaction with GPS2 onto hepatic acute phase protein promoters prevents N-Cor corepressor complex dissociation. Interacts with ABCA12 and ABCA1; this interaction is required for ABCA1 localization to the cell surface and is necessary for its normal activity and stability. Sumoylated by SUMO2 at Lys-395 and Lys-433 during the hepatic acute phase response, leading to promote interaction with GPS2 and prevent N-Cor corepressor complex dissociation.

The protein localises to the nucleus. Its function is as follows. Nuclear receptor that exhibits a ligand-dependent transcriptional activation activity. Binds preferentially to double-stranded oligonucleotide direct repeats having the consensus half-site sequence 5'-AGGTCA-3' and 4-nt spacing (DR-4). Regulates cholesterol uptake through MYLIP-dependent ubiquitination of LDLR, VLDLR and LRP8; DLDLR and LRP8. Interplays functionally with RORA for the regulation of genes involved in liver metabolism. Induces LPCAT3-dependent phospholipid remodeling in endoplasmic reticulum (ER) membranes of hepatocytes, driving SREBF1 processing and lipogenesis. Via LPCAT3, triggers the incorporation of arachidonate into phosphatidylcholines of ER membranes, increasing membrane dynamics and enabling triacylglycerols transfer to nascent very low-density lipoprotein (VLDL) particles. Via LPCAT3 also counteracts lipid-induced ER stress response and inflammation, likely by modulating SRC kinase membrane compartmentalization and limiting the synthesis of lipid inflammatory mediators. Plays an anti-inflammatory role during the hepatic acute phase response by acting as a corepressor: inhibits the hepatic acute phase response by preventing dissociation of the N-Cor corepressor complex. In Rattus norvegicus (Rat), this protein is Oxysterols receptor LXR-beta (Nr1h2).